Here is a 78-residue protein sequence, read N- to C-terminus: MPQQRKGGRRRRKVDLIAANHIDYVDYKDVDLLKHFISERGKILPRRVTGTSAKNQRKVANAIKRARIMGLLPFVAED.

This sequence belongs to the bacterial ribosomal protein bS18 family. In terms of assembly, part of the 30S ribosomal subunit. Forms a tight heterodimer with protein bS6.

Binds as a heterodimer with protein bS6 to the central domain of the 16S rRNA, where it helps stabilize the platform of the 30S subunit. The protein is Small ribosomal subunit protein bS18 of Lactobacillus delbrueckii subsp. bulgaricus (strain ATCC BAA-365 / Lb-18).